The following is a 127-amino-acid chain: Protein translocase subunit SecE (127 aa).

Helical transmembrane passes span 17 to 37 (VKWISISIFFILSFFINMCFY), 41 to 61 (LFIRIFIISCLMLCAIGTMIY), and 95 to 115 (FIVISVTIFISFILWSIDSVI).

This sequence belongs to the SecE/SEC61-gamma family. In terms of assembly, component of the Sec protein translocase complex. Heterotrimer consisting of SecY, SecE and SecG subunits. The heterotrimers can form oligomers, although 1 heterotrimer is thought to be able to translocate proteins. Interacts with the ribosome. Interacts with SecDF, and other proteins may be involved. Interacts with SecA.

Its subcellular location is the cell inner membrane. Functionally, essential subunit of the Sec protein translocation channel SecYEG. Clamps together the 2 halves of SecY. May contact the channel plug during translocation. In Buchnera aphidicola subsp. Acyrthosiphon pisum (strain APS) (Acyrthosiphon pisum symbiotic bacterium), this protein is Protein translocase subunit SecE.